The sequence spans 503 residues: Maturase K (503 aa).

This sequence belongs to the intron maturase 2 family. MatK subfamily.

Its subcellular location is the plastid. The protein resides in the chloroplast. Its function is as follows. Usually encoded in the trnK tRNA gene intron. Probably assists in splicing its own and other chloroplast group II introns. This Rosa acicularis (Prickly rose) protein is Maturase K.